The following is a 248-amino-acid chain: 3-deoxy-manno-octulosonate cytidylyltransferase (248 aa).

The protein belongs to the KdsB family.

Its subcellular location is the cytoplasm. The catalysed reaction is 3-deoxy-alpha-D-manno-oct-2-ulosonate + CTP = CMP-3-deoxy-beta-D-manno-octulosonate + diphosphate. It participates in nucleotide-sugar biosynthesis; CMP-3-deoxy-D-manno-octulosonate biosynthesis; CMP-3-deoxy-D-manno-octulosonate from 3-deoxy-D-manno-octulosonate and CTP: step 1/1. It functions in the pathway bacterial outer membrane biogenesis; lipopolysaccharide biosynthesis. Its function is as follows. Activates KDO (a required 8-carbon sugar) for incorporation into bacterial lipopolysaccharide in Gram-negative bacteria. This chain is 3-deoxy-manno-octulosonate cytidylyltransferase, found in Enterobacter sp. (strain 638).